Consider the following 432-residue polypeptide: Adenylosuccinate synthetase (432 aa).

GTP contacts are provided by residues 13-19 and 41-43; these read GDEGKGK and GHT. The active-site Proton acceptor is Asp14. 2 residues coordinate Mg(2+): Asp14 and Gly41. IMP-binding positions include 14–17, 39–42, Thr131, Arg145, Gln226, Thr241, and Arg305; these read DEGK and NAGH. The active-site Proton donor is His42. 301-307 is a substrate binding site; that stretch reads SVTGRAR. Residues Arg307, 333 to 335, and 416 to 418 contribute to the GTP site; these read KLD and STG.

The protein belongs to the adenylosuccinate synthetase family. Homodimer. Mg(2+) is required as a cofactor.

It is found in the cytoplasm. It catalyses the reaction IMP + L-aspartate + GTP = N(6)-(1,2-dicarboxyethyl)-AMP + GDP + phosphate + 2 H(+). The protein operates within purine metabolism; AMP biosynthesis via de novo pathway; AMP from IMP: step 1/2. In terms of biological role, plays an important role in the de novo pathway of purine nucleotide biosynthesis. Catalyzes the first committed step in the biosynthesis of AMP from IMP. The protein is Adenylosuccinate synthetase of Neisseria gonorrhoeae (strain ATCC 700825 / FA 1090).